Here is a 140-residue protein sequence, read N- to C-terminus: MAIERTFSIIKPDATRRNLTGAVNAVIETAGLRIVAQKRILMTKAQAETFYAVHSARPFFGDLVSFMTSGPVVVQVLEAENAVAKYREVMGATNPANAAEGTIRKLLAESIEANSAHGSDSVENAAVEIAQFFSGNEIVG.

The ATP site is built by Lys-11, Phe-59, Arg-87, Thr-93, Arg-104, and Asn-114. Catalysis depends on His-117, which acts as the Pros-phosphohistidine intermediate.

The protein belongs to the NDK family. Homotetramer. Mg(2+) serves as cofactor.

The protein resides in the cytoplasm. The catalysed reaction is a 2'-deoxyribonucleoside 5'-diphosphate + ATP = a 2'-deoxyribonucleoside 5'-triphosphate + ADP. The enzyme catalyses a ribonucleoside 5'-diphosphate + ATP = a ribonucleoside 5'-triphosphate + ADP. Its function is as follows. Major role in the synthesis of nucleoside triphosphates other than ATP. The ATP gamma phosphate is transferred to the NDP beta phosphate via a ping-pong mechanism, using a phosphorylated active-site intermediate. In Xanthobacter autotrophicus (strain ATCC BAA-1158 / Py2), this protein is Nucleoside diphosphate kinase.